The chain runs to 397 residues: Ubiquitin-like modifier-activating enzyme 5 (397 aa).

Residues glycine 76, aspartate 97, lysine 120, asparagine 143, and asparagine 177 each coordinate ATP. Residues cysteine 219 and cysteine 222 each contribute to the Zn(2+) site. The active-site Glycyl thioester intermediate is the cysteine 243. Positions 296 and 301 each coordinate Zn(2+). The tract at residues proline 343–aspartate 384 is disordered.

Belongs to the ubiquitin-activating E1 family. UBA5 subfamily.

In terms of biological role, E1-like enzyme which activates UFM1. The chain is Ubiquitin-like modifier-activating enzyme 5 from Drosophila pseudoobscura pseudoobscura (Fruit fly).